A 328-amino-acid polypeptide reads, in one-letter code: Tetraacyldisaccharide 4'-kinase (328 aa).

Position 55–62 (55–62 (TAGGNGKT)) interacts with ATP.

Belongs to the LpxK family.

The catalysed reaction is a lipid A disaccharide + ATP = a lipid IVA + ADP + H(+). It participates in glycolipid biosynthesis; lipid IV(A) biosynthesis; lipid IV(A) from (3R)-3-hydroxytetradecanoyl-[acyl-carrier-protein] and UDP-N-acetyl-alpha-D-glucosamine: step 6/6. Functionally, transfers the gamma-phosphate of ATP to the 4'-position of a tetraacyldisaccharide 1-phosphate intermediate (termed DS-1-P) to form tetraacyldisaccharide 1,4'-bis-phosphate (lipid IVA). The sequence is that of Tetraacyldisaccharide 4'-kinase from Escherichia coli (strain 55989 / EAEC).